The primary structure comprises 572 residues: MSKLIKGIAASDGVAIAKAYLLVEPDLTFDKNEKVTDVEGEVAKFNSAIEASKVELTKIRNNAEVQLGADKAAIFDAHLLVLDDPELIQPIQDKIKNENANAATALTDVTTQFVTIFESMDNEYMKERAADIRDVSKRVLSHILGVELPNPSMIDESVVIVGNDLTPSDTAQLNKEFVQGFATNIGGRTSHSAIMSRSLEIPAIVGTKSITQEVKQGDMIIVDGLNGDVIVNPTEDELIAYQDKRERYFADKKELQKLRDADTVTVDGVHAELAANIGTPNDLPGVIENGAQGIGLYRTEFLYMGRDQMPTEEEQFEAYKEVLEAMDGKRVVVRTLDIGGDKELSYLNLPEEMNPFLGYRAIRLCLAQQDIFRPQLRALLRASVYGKLNIMFPMVATINEFREAKAILLEEKENLKNEGHDISDDIELGIMVEIPATAALADVFAKEVDFFSIGTNDLIQYTLAADRMSERVSYLYQPYNPSILRLVKQVIEASHKEGKWTGMCGEMAGDETAIPLLLGLGLDEFSMSATSILKARRQINGLSKNEMTELANRAVDCATQEEVIELVNNYVK.

H191 acts as the Tele-phosphohistidine intermediate in catalysis. Phosphoenolpyruvate contacts are provided by R298 and R334. Mg(2+)-binding residues include E433 and D457. Phosphoenolpyruvate is bound by residues 456–457 (ND) and R467. C504 functions as the Proton donor in the catalytic mechanism.

This sequence belongs to the PEP-utilizing enzyme family. In terms of assembly, homodimer. Requires Mg(2+) as cofactor.

It is found in the cytoplasm. It carries out the reaction L-histidyl-[protein] + phosphoenolpyruvate = N(pros)-phospho-L-histidyl-[protein] + pyruvate. Functionally, general (non sugar-specific) component of the phosphoenolpyruvate-dependent sugar phosphotransferase system (sugar PTS). This major carbohydrate active-transport system catalyzes the phosphorylation of incoming sugar substrates concomitantly with their translocation across the cell membrane. Enzyme I transfers the phosphoryl group from phosphoenolpyruvate (PEP) to the phosphoryl carrier protein (HPr). The sequence is that of Phosphoenolpyruvate-protein phosphotransferase from Staphylococcus aureus (strain MSSA476).